The primary structure comprises 351 residues: Autophagy protein 5 (351 aa).

The tract at residues 106–143 (KSLSSPGSEREHYVRGGTRENISESGAEGEKDDNHGHD) is disordered. The span at 113–143 (SEREHYVRGGTRENISESGAEGEKDDNHGHD) shows a compositional bias: basic and acidic residues. K186 participates in a covalent cross-link: Glycyl lysine isopeptide (Lys-Gly) (interchain with G-Cter in ATG12).

This sequence belongs to the ATG5 family. Conjugated with ATG12. Post-translationally, conjugated to ATG12; which is essential for autophagy.

It is found in the preautophagosomal structure membrane. Its function is as follows. Involved in cytoplasm to vacuole transport (Cvt) and autophagic vesicle formation. Autophagy is essential for maintenance of amino acid levels and protein synthesis under nitrogen starvation. Required for selective autophagic degradation of the nucleus (nucleophagy). Also required for mitophagy, which eliminates defective or superfluous mitochondria in order to fulfill cellular energy requirements and prevent excess ROS production. Conjugation with ATG12, through a ubiquitin-like conjugating system involving ATG7 as an E1-like activating enzyme and ATG10 as an E2-like conjugating enzyme, is essential for its function. The ATG12-ATG5 conjugate acts as an E3-like enzyme which is required for lipidation of ATG8 and ATG8 association to the vesicle membranes. The protein is Autophagy protein 5 (ATG5) of Coccidioides immitis (strain RS) (Valley fever fungus).